A 49-amino-acid polypeptide reads, in one-letter code: Osteocalcin (49 aa).

One can recognise a Gla domain in the interval 1 to 47; that stretch reads YLDHGLGAPAPYPDPLEPRREVCELNPDCDELADHIGFQEAYRRFYG. P9 bears the Hydroxyproline mark. The Ca(2+) site is built by E17, E21, E24, and D30. 4-carboxyglutamate occurs at positions 17, 21, and 24. A disulfide bridge connects residues C23 and C29.

Belongs to the osteocalcin/matrix Gla protein family. Gamma-carboxyglutamate residues are formed by vitamin K dependent carboxylation by GGCX. These residues are essential for the binding of calcium. Decarboxylation promotes the hormone activity.

The protein localises to the secreted. The carboxylated form is one of the main organic components of the bone matrix, which constitutes 1-2% of the total bone protein. It acts as a negative regulator of bone formation and is required to limit bone formation without impairing bone resorption or mineralization. The carboxylated form binds strongly to apatite and calcium. Its function is as follows. The uncarboxylated form acts as a hormone secreted by osteoblasts, which regulates different cellular processes, such as energy metabolism, male fertility and brain development. Regulates of energy metabolism by acting as a hormone favoring pancreatic beta-cell proliferation, insulin secretion and sensitivity and energy expenditure. Uncarboxylated osteocalcin hormone also promotes testosterone production in the testes: acts as a ligand for G protein-coupled receptor GPRC6A at the surface of Leydig cells, initiating a signaling response that promotes the expression of enzymes required for testosterone synthesis in a CREB-dependent manner. Also acts as a regulator of brain development: osteocalcin hormone crosses the blood-brain barrier and acts as a ligand for GPR158 on neurons, initiating a signaling response that prevents neuronal apoptosis in the hippocampus, favors the synthesis of all monoamine neurotransmitters and inhibits that of gamma-aminobutyric acid (GABA). Osteocalcin also crosses the placenta during pregnancy and maternal osteocalcin is required for fetal brain development. This is Osteocalcin (BGLAP) from Sus scrofa (Pig).